Consider the following 407-residue polypeptide: Succinyl-diaminopimelate desuccinylase (407 aa).

Positions 1–10 are enriched in polar residues; it reads MSDIDNNLTS. The tract at residues 1–20 is disordered; sequence MSDIDNNLTSQTHQQATHQQ. The span at 11-20 shows a compositional bias: low complexity; that stretch reads QTHQQATHQQ. H93 lines the Zn(2+) pocket. D95 is an active-site residue. D126 lines the Zn(2+) pocket. The active-site Proton acceptor is the E160. The Zn(2+) site is built by E161, E189, and H379.

It belongs to the peptidase M20A family. DapE subfamily. Homodimer. Zn(2+) serves as cofactor. The cofactor is Co(2+).

It catalyses the reaction N-succinyl-(2S,6S)-2,6-diaminopimelate + H2O = (2S,6S)-2,6-diaminopimelate + succinate. Its pathway is amino-acid biosynthesis; L-lysine biosynthesis via DAP pathway; LL-2,6-diaminopimelate from (S)-tetrahydrodipicolinate (succinylase route): step 3/3. Functionally, catalyzes the hydrolysis of N-succinyl-L,L-diaminopimelic acid (SDAP), forming succinate and LL-2,6-diaminopimelate (DAP), an intermediate involved in the bacterial biosynthesis of lysine and meso-diaminopimelic acid, an essential component of bacterial cell walls. The chain is Succinyl-diaminopimelate desuccinylase from Psychrobacter arcticus (strain DSM 17307 / VKM B-2377 / 273-4).